The chain runs to 317 residues: MARKKIALIGGGQIGGVLAQLAALRELGDVVMFDIVEGLPQGKMLDIAEVGSVDGFDCNLKGTNSYEDIKGADVVIVTAGLPRKPGMSRDDLIEVNSKIMTSVAEGIKANAPNAFVIVISNPLDAMVTLCQKITGFPYNRVIGQAGVLDSARFKTFIAWELGVSVKDVNAMTLGGHGDDMVPLVRYASVNGIPVMELLEKKYKDKAKAKEVMEAMVKRTRGAGGEVVALLKTGSAFYSPASSAIQMAESILKDQKRVLPTCAHLNGEFGVKGFYVGVPCVLGENGVEQILEFELDAEEQAMMDKSVAAVKELVGSMK.

NAD(+) contacts are provided by residues 10–15 (GGGQIG) and aspartate 34. Substrate contacts are provided by arginine 83 and arginine 89. NAD(+) contacts are provided by residues asparagine 96 and 119-121 (ISN). 2 residues coordinate substrate: asparagine 121 and arginine 152. Histidine 176 serves as the catalytic Proton acceptor.

The protein belongs to the LDH/MDH superfamily. MDH type 3 family.

The catalysed reaction is (S)-malate + NAD(+) = oxaloacetate + NADH + H(+). Catalyzes the reversible oxidation of malate to oxaloacetate. This Citrifermentans bemidjiense (strain ATCC BAA-1014 / DSM 16622 / JCM 12645 / Bem) (Geobacter bemidjiensis) protein is Malate dehydrogenase.